The chain runs to 1858 residues: MSIVIPLGVDTAETSYLEMAAGSEPESVEASPVVVEKSNSYPHQLYTSSSHHSHSYIGLPYADHNYGARPPPTPPASPPPSVLISKNEVGIFTTPNFDETSSATTISTSEDGSYGTDVTRCICGFTHDDGYMICCDKCSVWQHIDCMGIDRQHIPDTYLCERCQPRNLDKERAVLLQRRKRENMSDGDTSATESGDEVPVELYTAFQHTPTSITLTASRVSKVNDKRRKKSGEKEQHISKCKKAFREGSRKSSRVKGSAPEIDPSSDGSNFGWETKIKAWMDRYEEANNNQYSEGVQREAQRIALRLGNGNDKKEMNKSDLNTNNLLFKPPVESHIQKNKKILKSAKDLPPDALIIEYRGKFMLREQFEANGYFFKRPYPFVLFYSKFHGLEMCVDARTFGNEARFIRRSCTPNAEVRHEIQDGTIHLYIYSIHSIPKGTEITIAFDFDYGNCKYKVDCACLKENPECPVLKRSSESMENINSGYETRRKKGKKDKDISKEKDTQNQNITLDCEGTTNKMKSPETKQRKLSPLRLSVSNNQEPDFIDDIEEKTPISNEVEMESEEQIAERKRKMTREERKMEAILQAFARLEKREKRREQALERISTAKTEVKTECKDTQIVSDAEVIQEQAKEENASKPTPAKVNRTKQRKSFSRSRTHIGQQRRRHRTVSMCSDIQPSSPDIEVTSQQNDIENTVLTIEPETETALAEIITETEVPALNKCPTKYPKTKKHLVNEWLSEKNEKTGKPSDGLSERPLRITTDPEVLATQLNSLPGLTYSPHVYSTPKHYIRFTSPFLSEKRRRKEPTENISGSCKKRWLKQALEEENSAILHRFNSPCQERSRSPAVNGENKSPLLLNDSCSLPDLTTPLKKRRFYQLLDSVYSETSTPTPSPYATPTHTDITPMDPSFATPPRIKSDDETCRNGYKPIYSPVTPVTPGTPGNTMHFENISSPESSPEIKRRTYSQEGYDRSSTMLTLGPFRNSNLTELGLQEIKTIGYTSPRSRTEVNRQCPGEKEPVSDLQLGLDAVEPTALHKTLETPAHDRAEPNSQLDSTHSGRGTMYSSWVKSPDRTGVNFSVNSNLRDLTPSHQLEVGGGFRISESKCLMQDDTRGMFMETTVFCTSEDGLVSGFGRTVNDNLIDGNCTPQNPPQKKKVSLLEYRKRQREARKSGSKTENFPLISVSPHASGSLSNNGDGCASSNDNGEQVDHTASLPLPTPATVYNATSEETSNNCPVKDATASEKNEPEVQWTASTSVEQVRERSYQRALLLSDHRKDKDSGGESPCVSCSPSHVQSSPSSHSNHIPQLQAKGPVPSFSELMEDPDPENPEPTTTNECPSPDTSQNTCKSPPKMSKPGSPGSVIPAQAHGKIFTKPDPQWDSTVSASEAENGVHLKTELQQKQLSNNNQALSKNHPPQTHVRNSSEQLSQKLPSVPTKLHCPPSPHLENPPKSSTPHTPVQHGYLSPKPPSQQLGSPYRPHHSQSPQVGTPQREPQRNFYPAAQNLPANTQQATSGTLFTQTPSGQSSATYSQFNQQSLNSTAPPPPPPPPPSSSYYQNQQPSANFQNYNQLKGSLSQQTVFTSGPNQALPGTTSQQTVPGHHVTPGHFLPSQNPTIHHQTAAAVVPPPPPPPPAPGPHLVQQPNSHQQHSVAHVVGPVHAVTPGSHIHSQTAGHHLPPPPPPPGPAPHHHPPPHPSTGLQGLQAQHQHVVNSAPPPPPPPPPSSVLASGHHTTSAQALHHPPHQGPPLFPSSAHPTVPPYPSQATHHTTLGPGPQHQPSGTGPHCPLPVTGPHLQPQGPNSIPTPTASGFCPHPGSVALPHGVQGPQQASPVPGQIPIHRAQVPPTFQNNYHGSGWH.

The short motif at 63–66 (DHNY) is the HCFC1-binding motif (HBM) element. Residues 118–166 (VTRCICGFTHDDGYMICCDKCSVWQHIDCMGIDRQHIPDTYLCERCQPR) form a PHD-type zinc finger. Residues cysteine 121, cysteine 123, cysteine 135, cysteine 138, histidine 143, cysteine 146, cysteine 160, and cysteine 163 each contribute to the Zn(2+) site. Residues 217 to 269 (ASRVSKVNDKRRKKSGEKEQHISKCKKAFREGSRKSSRVKGSAPEIDPSSDGS) are disordered. Basic and acidic residues predominate over residues 232–250 (GEKEQHISKCKKAFREGSR). Residues 330–447 (PPVESHIQKN…KGTEITIAFD (118 aa)) enclose the SET domain. Residue serine 435 is glycosylated (O-linked (GlcNAc) serine). Threonine 440 carries O-linked (GlcNAc) threonine glycosylation. Residues 475-530 (SESMENINSGYETRRKKGKKDKDISKEKDTQNQNITLDCEGTTNKMKSPETKQRKL) form a disordered region. Residues 494-504 (KDKDISKEKDT) show a composition bias toward basic and acidic residues. Residues 505-520 (QNQNITLDCEGTTNKM) show a composition bias toward polar residues. The stretch at 559 to 615 (VEMESEEQIAERKRKMTREERKMEAILQAFARLEKREKRREQALERISTAKTEVKTE) forms a coiled coil. Residue serine 623 is modified to Phosphoserine. Positions 630-687 (EQAKEENASKPTPAKVNRTKQRKSFSRSRTHIGQQRRRHRTVSMCSDIQPSSPDIEVT) are disordered. A compositionally biased stretch (basic residues) spans 646 to 670 (NRTKQRKSFSRSRTHIGQQRRRHRT). The segment covering 672–687 (SMCSDIQPSSPDIEVT) has biased composition (polar residues). 2 positions are modified to phosphoserine: serine 837 and serine 845. 2 stretches are compositionally biased toward low complexity: residues 887-901 (TSTP…PTHT) and 933-957 (PVTP…PESS). 2 disordered regions span residues 887–960 (TSTP…SPEI) and 1039–1068 (LETP…SSWV). Residues 1039–1048 (LETPAHDRAE) show a composition bias toward basic and acidic residues. Polar residues predominate over residues 1049–1068 (PNSQLDSTHSGRGTMYSSWV). Serine 1070 is subject to Phosphoserine. Disordered stretches follow at residues 1164–1561 (KRQR…QNQQ) and 1581–1835 (VFTS…PVPG). 2 stretches are compositionally biased toward polar residues: residues 1186–1206 (PHAS…NDNG) and 1222–1235 (TVYN…SNNC). Residue serine 1273 is modified to Phosphoserine. A compositionally biased stretch (basic and acidic residues) spans 1273–1282 (SDHRKDKDSG). Low complexity-rich tracts occupy residues 1285–1303 (SPCV…SSHS) and 1349–1362 (KSPP…SPGS). The residue at position 1359 (serine 1359) is a Phosphoserine. Polar residues-rich tracts occupy residues 1400-1432 (QQKQ…SQKL) and 1506-1542 (LPAN…LNST). Over residues 1543–1553 (APPPPPPPPPS) the composition is skewed to pro residues. Over residues 1581–1599 (VFTSGPNQALPGTTSQQTV) the composition is skewed to polar residues. A compositionally biased stretch (pro residues) spans 1626–1637 (VPPPPPPPPAPG). Over residues 1642–1651 (QQPNSHQQHS) the composition is skewed to polar residues. Pro residues predominate over residues 1677–1687 (LPPPPPPPGPA). Positions 1698–1711 (TGLQGLQAQHQHVV) are enriched in polar residues. Over residues 1714–1724 (APPPPPPPPPS) the composition is skewed to pro residues. A compositionally biased stretch (polar residues) spans 1798–1808 (QGPNSIPTPTA).

Belongs to the class V-like SAM-binding methyltransferase superfamily. Histone-lysine methyltransferase family. TRX/MLL subfamily. As to quaternary structure, component of a complex composed of KMT2E (isoform 3), OGT and USP7; the complex stabilizes KMT2E, preventing KMT2E ubiquitination and proteasomal-mediated degradation. Isoform 3 interacts (via N-terminus) with OGT (via TRP repeats). Isoform 3 interacts with deubiquitinating enzyme USP7 (via MATH domain). Isoform 3 interacts (via HBM motif) with HCFC1 (via Kelch domain). Isoform 3 interacts with E2F1; the interaction is probably indirect and is mediated via HCFC1. In terms of processing, ubiquitinated. Deubiquitinated by USP7. O-glycosylated at Ser-435 and Thr-440 in the SET domain by OGT which probably prevents KMT2E proteasomal-mediated degradation. Widely expressed in both adult and fetal tissues. Highest levels of expression observed in fetal thymus and kidney and in adult hematopoietic tissues, jejunum and cerebellum. Isoform NKp44L: Not detected on circulating cells from healthy individuals, but is expressed on a large panel of tumor and transformed cells.

The protein localises to the chromosome. It is found in the cytoplasm. It localises to the cytoskeleton. The protein resides in the microtubule organizing center. Its subcellular location is the centrosome. The protein localises to the nucleus speckle. It is found in the nucleus. It localises to the nucleoplasm. The protein resides in the cell membrane. In terms of biological role, associates with chromatin regions downstream of transcriptional start sites of active genes and thus regulates gene transcription. Chromatin interaction is mediated via the binding to tri-methylated histone H3 at 'Lys-4' (H3K4me3). Key regulator of hematopoiesis involved in terminal myeloid differentiation and in the regulation of hematopoietic stem cell (HSCs) self-renewal by a mechanism that involves DNA methylation. Also acts as an important cell cycle regulator, participating in cell cycle regulatory network machinery at multiple cell cycle stages including G1/S transition, S phase progression and mitotic entry. Recruited to E2F1 responsive promoters by HCFC1 where it stimulates tri-methylation of histone H3 at 'Lys-4' and transcriptional activation and thereby facilitates G1 to S phase transition. During myoblast differentiation, required to suppress inappropriate expression of S-phase-promoting genes and maintain expression of determination genes in quiescent cells. Cellular ligand for NCR2/NKp44, may play a role as a danger signal in cytotoxicity and NK-cell-mediated innate immunity. The sequence is that of Inactive histone-lysine N-methyltransferase 2E (KMT2E) from Homo sapiens (Human).